The chain runs to 249 residues: tRNA pseudouridine synthase A (249 aa).

Aspartate 52 functions as the Nucleophile in the catalytic mechanism. Substrate is bound at residue tyrosine 110.

The protein belongs to the tRNA pseudouridine synthase TruA family. As to quaternary structure, homodimer.

The enzyme catalyses uridine(38/39/40) in tRNA = pseudouridine(38/39/40) in tRNA. Its function is as follows. Formation of pseudouridine at positions 38, 39 and 40 in the anticodon stem and loop of transfer RNAs. In Syntrophomonas wolfei subsp. wolfei (strain DSM 2245B / Goettingen), this protein is tRNA pseudouridine synthase A.